The sequence spans 78 residues: TP53-regulated inhibitor of apoptosis 1 (78 aa).

Positions 1–52 (MNSVGEECTDMKREYDQCFNRWFAEKFLKGECSGDPCTELFRRYRDCVQKAI) form a coiled coil. One can recognise a CHCH domain in the interval 5 to 55 (GEECTDMKREYDQCFNRWFAEKFLKGECSGDPCTELFRRYRDCVQKAIKDK). 2 short sequence motifs (cx9C motif) span residues 8-18 (CTDMKREYDQC) and 37-47 (CTELFRRYRDC). 2 cysteine pairs are disulfide-bonded: cysteine 8/cysteine 47 and cysteine 18/cysteine 37.

The protein belongs to the TRIAP1/MDM35 family. As to quaternary structure, monomer. Forms a complex with prelid1 in the mitochondrion intermembrane space. Interacts with prelid3a. In terms of tissue distribution, expressed in the developing pronephros.

The protein localises to the mitochondrion. It is found in the mitochondrion intermembrane space. It catalyses the reaction a 1,2-diacyl-sn-glycero-3-phosphate(in) = a 1,2-diacyl-sn-glycero-3-phosphate(out). In terms of biological role, involved in the modulation of the mitochondrial apoptotic pathway by ensuring the accumulation of cardiolipin (CL) in mitochondrial membranes. The triap1:prelid1 complex probably functions as a phosphatidic acid (PA) transporter across the mitochondrion intermembrane space to provide PA for cardiolipin CL synthesis in the inner membrane. Likewise, the triap1:prelid3a complex mediates the transfer of phosphatidic acid (PA) between liposomes (in vitro) and probably functions as a PA transporter across the mitochondrion intermembrane space (in vivo). Mediates cell survival by inhibiting activation of caspase-9 which prevents induction of apoptosis. Required for pronephros development; probably involved at an early stage in the formation of pronephric components derived from the somatic layer. The protein is TP53-regulated inhibitor of apoptosis 1 of Xenopus tropicalis (Western clawed frog).